A 460-amino-acid polypeptide reads, in one-letter code: Biphenyl 2,3-dioxygenase subunit alpha (460 aa).

Positions 56–165 constitute a Rieske domain; the sequence is WLLMGHETQI…VETYKGLIFA (110 aa). [2Fe-2S] cluster is bound by residues Cys-98, His-100, Cys-118, and His-121. 217–230 is a binding site for substrate; the sequence is QFCSDMYHAGTTSH. The Fe cation site is built by His-224, His-230, and Asp-378.

Belongs to the bacterial ring-hydroxylating dioxygenase alpha subunit family. Heterohexamer consisting of three BphA1 subunits and three BphA2 subunits. The multicomponent biphenyl dioxygenase system is composed of a ferredoxin reductase (BphA4), a ferredoxin (BphA3), and a terminal oxygenase (BphA1A2). [2Fe-2S] cluster is required as a cofactor. Fe cation serves as cofactor.

The catalysed reaction is biphenyl + NADH + O2 + H(+) = (2R,3S)-3-phenylcyclohexa-3,5-diene-1,2-diol + NAD(+). It participates in xenobiotic degradation; biphenyl degradation; 2-hydroxy-2,4-pentadienoate and benzoate from biphenyl: step 1/4. Functionally, part of the oxygenase component of the biphenyl dioxygenase system that catalyzes the stereospecific dihydroxylation of the aromatic ring of biphenyl, yielding a dihydrodiol compound. Is essential for biphenyl degradation and growth of Rhodococcus sp. strain RHA1 on biphenyl as the sole source of carbon and energy. Can also use naphtalene and 4-chlorobiphenyl (4-CB) as substrates, as well as some polychlorinated biphenyls (PCB) such as 2,2'-dichlorobiphenyl, 2,3-dichlorobiphenyl and 2,5,2'-trichlorobiphenyl. Exhibits weak activity toward dibenzofuran and dibenzo-p-dioxin. Electrons are transferred from NADH to the [2Fe-2S] cluster in BphA1 via FAD of BphA4 and [2Fe-2S] cluster of BphA3. This chain is Biphenyl 2,3-dioxygenase subunit alpha, found in Rhodococcus jostii (strain RHA1).